A 522-amino-acid polypeptide reads, in one-letter code: Glucose-6-phosphate isomerase (522 aa).

The Proton donor role is filled by Glu-351. Active-site residues include His-382 and Lys-491.

The protein belongs to the GPI family.

Its subcellular location is the cytoplasm. It catalyses the reaction alpha-D-glucose 6-phosphate = beta-D-fructose 6-phosphate. The protein operates within carbohydrate biosynthesis; gluconeogenesis. It functions in the pathway carbohydrate degradation; glycolysis; D-glyceraldehyde 3-phosphate and glycerone phosphate from D-glucose: step 2/4. In terms of biological role, catalyzes the reversible isomerization of glucose-6-phosphate to fructose-6-phosphate. This chain is Glucose-6-phosphate isomerase, found in Albidiferax ferrireducens (strain ATCC BAA-621 / DSM 15236 / T118) (Rhodoferax ferrireducens).